Reading from the N-terminus, the 292-residue chain is Small ribosomal subunit biogenesis GTPase RsgA (292 aa).

The CP-type G domain maps to 62–213 (KNSLVRPPIV…IADTPGFSSL (152 aa)). GTP-binding positions include 111–114 (SKMD) and 156–164 (GQTGVGKST). Zn(2+) contacts are provided by C237, C242, H244, and C250.

Belongs to the TRAFAC class YlqF/YawG GTPase family. RsgA subfamily. In terms of assembly, monomer. Associates with 30S ribosomal subunit, binds 16S rRNA. Zn(2+) serves as cofactor.

The protein resides in the cytoplasm. One of several proteins that assist in the late maturation steps of the functional core of the 30S ribosomal subunit. Helps release RbfA from mature subunits. May play a role in the assembly of ribosomal proteins into the subunit. Circularly permuted GTPase that catalyzes slow GTP hydrolysis, GTPase activity is stimulated by the 30S ribosomal subunit. The chain is Small ribosomal subunit biogenesis GTPase RsgA from Streptococcus pneumoniae serotype 4 (strain ATCC BAA-334 / TIGR4).